A 294-amino-acid chain; its full sequence is Probable 2-(5''-triphosphoribosyl)-3'-dephosphocoenzyme-A synthase (294 aa).

The protein belongs to the CitG/MdcB family.

The catalysed reaction is 3'-dephospho-CoA + ATP = 2'-(5''-triphospho-alpha-D-ribosyl)-3'-dephospho-CoA + adenine. The polypeptide is Probable 2-(5''-triphosphoribosyl)-3'-dephosphocoenzyme-A synthase (Streptococcus pyogenes serotype M3 (strain ATCC BAA-595 / MGAS315)).